A 239-amino-acid chain; its full sequence is Adapter protein MecA (239 aa).

Basic and acidic residues predominate over residues 118 to 128 (EQRTKEKEAQG). Positions 118–137 (EQRTKEKEAQGSKRQKSSAR) are disordered.

The protein belongs to the MecA family. As to quaternary structure, homodimer.

In terms of biological role, enables the recognition and targeting of unfolded and aggregated proteins to the ClpC protease or to other proteins involved in proteolysis. The polypeptide is Adapter protein MecA (Staphylococcus aureus (strain bovine RF122 / ET3-1)).